Consider the following 449-residue polypeptide: Transcription factor AP-2 gamma (449 aa).

Lys-10 is covalently cross-linked (Glycyl lysine isopeptide (Lys-Gly) (interchain with G-Cter in SUMO)). Residues 13 to 58 (EDCEDRHDSSSNGNPRIPHLSSPGQHLYSPAPPLSHTGVAEYQPPP) are disordered. The PPxY motif motif lies at 59–64 (YFPPPY). Positions 94–130 (AATGSQQQAWPGRQSQEGSSLASHHSRSASLIPHISG) are disordered. A compositionally biased stretch (polar residues) spans 95-111 (ATGSQQQAWPGRQSQEG). The span at 112-124 (SSLASHHSRSASL) shows a compositional bias: low complexity. At Ser-251 the chain carries Phosphoserine; by PKA. The interval 292 to 423 (RRKAAHVTLL…YIKEALIAID (132 aa)) is H-S-H (helix-span-helix), dimerization. Positions 426–449 (YMNPGDQSPADSSKTMEKMEKHRK) are disordered. Ser-433 is subject to Phosphoserine. Positions 439 to 449 (KTMEKMEKHRK) are enriched in basic and acidic residues.

It belongs to the AP-2 family. Binds DNA as a dimer. Can form homodimers or heterodimers with other AP-2 family members. Interacts with WWOX. Interacts with UBE2I. Interacts with KCTD1; this interaction represses transcription activation. Interacts with CITED2 (via C-terminus); the interaction stimulates TFAP2B-transcriptional activity. Interacts with CITED4. Interacts with MTA1. In terms of processing, sumoylated on Lys-10; which inhibits transcriptional activity. As to expression, expressed in lung, ovary and testis. Expressed in most squamous epithelia. Also, detected in several exocrine glands including the prostate, the preputial and salivary glands, serous glands of the tongue and ocular harderian glands.

It is found in the nucleus. In terms of biological role, sequence-specific DNA-binding transcription factor that interacts with cellular enhancer elements to regulate transcription of selected genes, and which plays a key role in early embryonic development. AP-2 factors bind to the consensus sequence 5'-GCCNNNGGC-3' and activate genes involved in a large spectrum of important biological functions. TFAP2C plays a key role in early embryonic development by regulating both inner cell mass (ICM) and trophectoderm differentiation. At the 8-cell stage, during morula development, controls expression of cell-polarity genes. Upon trophoblast commitment, binds to late trophectoderm genes in blastocysts together with CDX2, and later to extra-embryonic ectoderm genes together with SOX2. Binds to both closed and open chromatin with other transcription factors. The chain is Transcription factor AP-2 gamma from Mus musculus (Mouse).